The primary structure comprises 186 residues: FMN reductase (NADPH) (186 aa).

The protein belongs to the SsuE family.

It catalyses the reaction FMNH2 + NADP(+) = FMN + NADPH + 2 H(+). The sequence is that of FMN reductase (NADPH) (msuE) from Pseudomonas aeruginosa (strain ATCC 15692 / DSM 22644 / CIP 104116 / JCM 14847 / LMG 12228 / 1C / PRS 101 / PAO1).